Consider the following 140-residue polypeptide: Putative pre-16S rRNA nuclease (140 aa).

It belongs to the YqgF nuclease family.

The protein localises to the cytoplasm. Functionally, could be a nuclease involved in processing of the 5'-end of pre-16S rRNA. This Aeromonas hydrophila subsp. hydrophila (strain ATCC 7966 / DSM 30187 / BCRC 13018 / CCUG 14551 / JCM 1027 / KCTC 2358 / NCIMB 9240 / NCTC 8049) protein is Putative pre-16S rRNA nuclease.